We begin with the raw amino-acid sequence, 172 residues long: uncharacterized protein (172 aa).

Helical transmembrane passes span 20-40 (LVLITISIIALSTAYIAEYIF), 48-68 (CVYERFPYLMLIKISLTALII), 76-96 (LILILITILSSCILSTYHSFV), and 146-166 (MTEYNLLLNICLLIFLGLILF).

It localises to the cell membrane. This is an uncharacterized protein from Rickettsia prowazekii (strain Madrid E).